Consider the following 100-residue polypeptide: Urease subunit gamma 2 (100 aa).

It belongs to the urease gamma subunit family. In terms of assembly, heterotrimer of UreA (gamma), UreB (beta) and UreC (alpha) subunits. Three heterotrimers associate to form the active enzyme.

The protein resides in the cytoplasm. The enzyme catalyses urea + 2 H2O + H(+) = hydrogencarbonate + 2 NH4(+). It participates in nitrogen metabolism; urea degradation; CO(2) and NH(3) from urea (urease route): step 1/1. In terms of biological role, disrupting the ure2 operon has no effect on urease activity or pathogen survival in BALB/c mice when administered orally. The protein is Urease subunit gamma 2 of Brucella abortus (strain 2308).